A 189-amino-acid polypeptide reads, in one-letter code: Peptide deformylase (189 aa).

Residues Cys98 and His140 each coordinate Fe cation. Glu141 is a catalytic residue. His144 contacts Fe cation.

Belongs to the polypeptide deformylase family. The cofactor is Fe(2+).

The enzyme catalyses N-terminal N-formyl-L-methionyl-[peptide] + H2O = N-terminal L-methionyl-[peptide] + formate. Functionally, removes the formyl group from the N-terminal Met of newly synthesized proteins. Requires at least a dipeptide for an efficient rate of reaction. N-terminal L-methionine is a prerequisite for activity but the enzyme has broad specificity at other positions. This Porphyromonas gingivalis (strain ATCC 33277 / DSM 20709 / CIP 103683 / JCM 12257 / NCTC 11834 / 2561) protein is Peptide deformylase.